We begin with the raw amino-acid sequence, 498 residues long: Pre-glycoprotein polyprotein GP complex (498 aa).

The N-myristoyl glycine; by host moiety is linked to residue G2. Residues 2–17 (GQIVTMFEALPHIIDE) are Extracellular-facing. The helical transmembrane segment at 18-33 (VINIVIIVLIIITSIK) threads the bilayer. Residues 34-58 (AVYNFATCGILALVSFLFLAGRSCG) are Cytoplasmic-facing. C57 is a Zn(2+) binding site. At 59 to 438 (MYGLNGPDIY…QGSTPLALMD (380 aa)) the chain is on the extracellular side. Residues N85, N95, N114, N124, and N171 are each glycosylated (N-linked (GlcNAc...) asparagine; by host). 6 disulfide bridges follow: C92–C239, C123–C160, C184–C220, C285–C298, C307–C316, and C370–C391. An N-linked (GlcNAc...) asparagine; by host glycan is attached at N232. 3 N-linked (GlcNAc...) asparagine; by host glycosylation sites follow: N371, N396, and N401. A helical transmembrane segment spans residues 439-459 (LLMFSTSAYLISIFLHFVRIP). At 460–498 (THRHIKGGSCPKPHRLTNKGICSCGAFKVPGVKTIWKRR) the chain is on the cytoplasmic side. H461, H463, C469, H473, C481, and C483 together coordinate Zn(2+).

The protein belongs to the arenaviridae GPC protein family. In terms of assembly, interacts with glycoprotein G2. Part of the GP complex (GP-C) together with glycoprotein G1 and glycoprotein G2. The GP-complex interacts with protein Z, which interacts with ribonucleocapsid; these interactions may induce virion budding. As to quaternary structure, homotrimer; disulfide-linked. In pre-fusion state, G1 homotrimers bind G2 homotrimers via ionic interactions. Part of the GP complex (GP-C) together with glycoprotein G2 and the stable signal peptide. Interacts with the primary host receptor DAG1 on the cell surface. The GP-complex interacts with protein Z, which interacts with ribonucleocapsid; these interactions may induce virion budding. Homotrimer. Interacts with the stable signal peptide. In pre-fusion state, G2 homotrimers bind G1 homotrimers via ionic interactions. Part of the GP complex (GP-C) together with glycoprotein G1 and the stable signal peptide. Acidification in the endosome triggers rearrangements, which ultimately leads to a 6 helix bundle formed by the two heptad repeat domains (HR1 and HR2) in post-fusion state. The GP-complex interacts with protein Z, which interacts with ribonucleocapsid; these interactions may induce virion budding. Post-translationally, specific enzymatic cleavages in vivo yield mature proteins. GP-C polyprotein is cleaved in the endoplasmic reticulum by the host protease MBTPS1. Only cleaved glycoprotein is incorporated into virions. In terms of processing, the SSP remains stably associated with the GP complex following cleavage by signal peptidase and plays crucial roles in the trafficking of GP through the secretory pathway. Myristoylation is necessary for GP2-mediated fusion activity.

The protein localises to the virion membrane. Its subcellular location is the host endoplasmic reticulum membrane. The protein resides in the host Golgi apparatus membrane. It is found in the host cell membrane. Functionally, functions as a cleaved signal peptide that is retained as the third component of the GP complex (GP-C). Helps to stabilize the spike complex in its native conformation. The SSP is required for efficient glycoprotein expression, post-translational maturation cleavage of G1 and G2, glycoprotein transport to the cell surface plasma membrane, formation of infectious virus particles, and acid pH-dependent glycoprotein-mediated cell fusion. Its function is as follows. Forms the virion spikes together with glycoprotein G2. The glycoprotein spike trimers are connected to the underlying matrix. Interacts with the host receptor. Mediates virus attachment to the host primary receptor alpha-dystroglycan DAG1 (alpha-DG) at the cell surface. Down-modulates host DAG1. In terms of biological role, forms the virion spikes together with glycoprotein G1. The glycoprotein spike trimers are connected to the underlying matrix. Class I viral fusion protein that directs fusion of viral and host endosomal membranes, leading to delivery of the nucleocapsid into the cytoplasm. Membrane fusion is mediated by irreversible conformational changes induced by acidification. The polypeptide is Pre-glycoprotein polyprotein GP complex (Homo sapiens (Human)).